Consider the following 431-residue polypeptide: Tol-Pal system protein TolB (431 aa).

Residues 1-18 (MKALLLSLLLLLPVVALA) form the signal peptide. Positions 410–431 (LPLRTEKGTYQTPDWSPLPQAQ) are disordered.

The protein belongs to the TolB family. In terms of assembly, the Tol-Pal system is composed of five core proteins: the inner membrane proteins TolA, TolQ and TolR, the periplasmic protein TolB and the outer membrane protein Pal. They form a network linking the inner and outer membranes and the peptidoglycan layer.

The protein resides in the periplasm. In terms of biological role, part of the Tol-Pal system, which plays a role in outer membrane invagination during cell division and is important for maintaining outer membrane integrity. The sequence is that of Tol-Pal system protein TolB from Myxococcus xanthus.